Consider the following 419-residue polypeptide: MSEEEKKVYLEDWRSAKEWGGFLYSIERWERIAEVEKIVCNACKEICLGLREEELLGLLAEGGMKKTLKEEFSEDKAKDARYLEYIVVDDVLLLDAHREYGGEVTKELVRQMLLGKEGKDIDKRYVDRVAGVVRERQRKREEETERSVKELVGDEEKAKSKEEKAKSKRGRKGKSASAPSEQEEEKKESEVEEAEQGGEVEALPVEVGGARSKGGKKKSKGGRKCFKIHRRVLRWTKSPEKIKEEWDKGSEERWKGRSLEEIKEQKIVHDITGVLELLRSEDADRFFMDAGKYRKGGSERQRMVAIGALETGGQRMTGVVEVGTFKDGDGCPVVYHLRFKPTSIGSIGDVINPGVVEASDVGRVDEGEECEDADKFVYPKGVRFETVKETGSFQIVWKNPSDTSEVLRRLIVYCRPCVI.

Over residues 136–165 the composition is skewed to basic and acidic residues; sequence RQRKREEETERSVKELVGDEEKAKSKEEKA. The disordered stretch occupies residues 136–222; that stretch reads RQRKREEETE…KGGKKKSKGG (87 aa). The segment covering 213–222 has biased composition (basic residues); the sequence is KGGKKKSKGG.

It belongs to the UPF0329 family.

This chain is UPF0329 protein ECU07_1890/ECU10_0010, found in Encephalitozoon cuniculi (strain GB-M1) (Microsporidian parasite).